A 377-amino-acid polypeptide reads, in one-letter code: MSESKIDNRLWSSKARNLSPYVPGEQPQHDDLCKLNTNENPFPPSPKVGEAITKVLAQQADDLRLYPAPESEELRGALAALYNLDINQVFVGNGSDEVLALVFASFFLKNRPVLAPDISYSFYPVYANTFGIELVQIPLEADFSISPDAYRRPCSGIIIANPNAPTGLLLSLADIRKLAGEHSDSVIVIDEAYIDFAQLEEASAESQMSAISLINEFDNLLVTQTFSKSRSLAGLRVGMAFGNASLIEALTRMKNSFNSYPLDKLAQAGATASVLDVEYFEQTCQQVIDLRTSLTAELTALGYDVLPSHANFVFARPHDGAASQVAEVLREQGIIVRHFDKPRINEYLRITIGTPSQHERLINALKALQAVADVEAS.

A disordered region spans residues 17–44; that stretch reads NLSPYVPGEQPQHDDLCKLNTNENPFPP. Lys228 is subject to N6-(pyridoxal phosphate)lysine.

The protein belongs to the class-II pyridoxal-phosphate-dependent aminotransferase family. Histidinol-phosphate aminotransferase subfamily. As to quaternary structure, homodimer. Pyridoxal 5'-phosphate serves as cofactor.

The catalysed reaction is L-histidinol phosphate + 2-oxoglutarate = 3-(imidazol-4-yl)-2-oxopropyl phosphate + L-glutamate. Its pathway is amino-acid biosynthesis; L-histidine biosynthesis; L-histidine from 5-phospho-alpha-D-ribose 1-diphosphate: step 7/9. This chain is Histidinol-phosphate aminotransferase 2, found in Psychrobacter arcticus (strain DSM 17307 / VKM B-2377 / 273-4).